Consider the following 910-residue polypeptide: MEAKVEEKEPEPVENAGPDAPVRLTPMMEQYIEIKAANVDSLLFYRMGDFYELFFDDAVAASAALGITLTKRGKHLGEDIPMCGVPVHAADDYLQKLIAKGYRVAVCEQVEDPAEAKKRGSKSVVKRDVIRLVTPGTLTEEKLLDPAQANFLMAMGRTRGDGALALVWIDISTGTFRVAETTPDRLFADIMRVDPRELVVADSAFHDEELRPVFDLIGKAVTPQPATLFDSAAAQTRIQHYFNVATLDGFGQFSRPELSAISGAIAYIEKTQISERPPLMRPEREHEGGTLFIDPATRASLELARTMSGNRDGSLLKAIDRTVTGGGARLLAERLTAPLTSPKEIALRLDSVSWCLSEQTLCEALRLELKGVPDMPRALSRLAVGRGGPRDLGALACGFEAAGGIASLLDGALLPDELAAAREAIEKMPAGFAAHLDRALADELPLLKRDGGFVREGYNSELDEMRALRDQSRRVIAGLQADYIEETGIKSLKIKHNNVLGYFIEVTANNSGAMTDTDEAKSRFIHRQTMANAMRFTTTELAELESKIANAADRALSIELAIFEELTAEAVAHADSIRAAASALSVFDVSTALAVLAEEQGYCRPHVDDSLSFNIVAGRHPVVEQALRRQAANPFVANDCDLSPQRDGGDGAIWLLTGPNMGGKSTFLRQNALIAILAQMGSFVPAGSAHIGVVDRLFSRVGASDDLARGRSTFMVEMVETAAILNQAGEHSLVILDEIGRGTATFDGLSIAWAAVEYLHEKNRCRALFATHFHEMTALSEKLERLSNVTMRVKEWDNDVIFLHEVAKGAADRSYGVQVARLAGLPEAVVNRARDVLHQLEAGETSGKADRLIDDLPLFSVMLQQEKPKPQIQAKDSELANAVAAISPDELTPREALDLIYKLKELAGKA.

The segment covering 1–11 has biased composition (basic and acidic residues); the sequence is MEAKVEEKEPE. A disordered region spans residues 1 to 21; that stretch reads MEAKVEEKEPEPVENAGPDAP. ATP is bound at residue 658–665; sequence GPNMGGKS.

This sequence belongs to the DNA mismatch repair MutS family.

This protein is involved in the repair of mismatches in DNA. It is possible that it carries out the mismatch recognition step. This protein has a weak ATPase activity. The protein is DNA mismatch repair protein MutS of Brucella abortus (strain 2308).